Here is a 242-residue protein sequence, read N- to C-terminus: MVSGRFYLSCLLLGSLGSMCILFTIYWMQYWRGGFAWNGSIYMFNWHPVLMVAGMVVFYGGASLVYRLPQSWVGPKLPWKLLHAALHLMAFVLTVVGLVAVFTFHNHGRTANLYSLHSWLGITTVFLFACQWFLGFAVFLLPWASMWLRSLLKPIHVFFGAAILSLSIASVISGINEKLFFSLKNTTRPYHSLPSEAVFANSTGMLVVAFGLLVLYILLASSWKRPEPGILTDRQPLLHDGE.

Topologically, residues 1–7 (MVSGRFY) are cytoplasmic. The chain crosses the membrane as a helical span at residues 8–28 (LSCLLLGSLGSMCILFTIYWM). The region spanning 12 to 219 (LLGSLGSMCI…FGLLVLYILL (208 aa)) is the Cytochrome b561 domain. At 29–45 (QYWRGGFAWNGSIYMFN) the chain is on the lumenal side. A glycan (N-linked (GlcNAc...) asparagine) is linked at Asn38. The chain crosses the membrane as a helical span at residues 46 to 66 (WHPVLMVAGMVVFYGGASLVY). Heme b-binding residues include His47 and Arg67. The Cytoplasmic segment spans residues 67–83 (RLPQSWVGPKLPWKLLH). Lys76 and Lys80 together coordinate L-ascorbate. His83 contacts heme b. A helical transmembrane segment spans residues 84–104 (AALHLMAFVLTVVGLVAVFTF). At 105-119 (HNHGRTANLYSLHSW) the chain is on the lumenal side. Residues 112–115 (NLYS) and His117 contribute to the heme b site. The helical transmembrane segment at 120–140 (LGITTVFLFACQWFLGFAVFL) threads the bilayer. Residues 141-154 (LPWASMWLRSLLKP) are Cytoplasmic-facing. L-ascorbate is bound at residue Arg149. Residues 155–175 (IHVFFGAAILSLSIASVISGI) form a helical membrane-spanning segment. Positions 156 and 177 each coordinate heme b. The Lumenal portion of the chain corresponds to 176–202 (NEKLFFSLKNTTRPYHSLPSEAVFANS). A helical transmembrane segment spans residues 203 to 223 (TGMLVVAFGLLVLYILLASSW). Lys224 provides a ligand contact to heme b. Residues 224–242 (KRPEPGILTDRQPLLHDGE) lie on the Cytoplasmic side of the membrane.

As to quaternary structure, homodimer. Requires heme b as cofactor. N-glycosylated.

The protein localises to the late endosome membrane. It is found in the lysosome membrane. It catalyses the reaction Fe(3+)(out) + L-ascorbate(in) = monodehydro-L-ascorbate radical(in) + Fe(2+)(out) + H(+). Its function is as follows. Transmembrane reductase that uses ascorbate as an electron donor in the cytoplasm and transfers electrons across membranes to reduce iron cations Fe(3+) into Fe(2+) in the lumen of the late endosome and lysosome. Reduced iron can then be extruded from the late endosome and lysosome to the cytoplasm by divalent metal-specific transporters. It is therefore most probably involved in endosomal and lysosomal cellular iron homeostasis. This chain is Lysosomal membrane ascorbate-dependent ferrireductase CYB561A3, found in Homo sapiens (Human).